The sequence spans 291 residues: Phosphatidylglycerol--prolipoprotein diacylglyceryl transferase (291 aa).

Transmembrane regions (helical) follow at residues tryptophan 24 to leucine 44, phenylalanine 64 to tyrosine 84, isoleucine 99 to leucine 119, and glycine 125 to leucine 145. Arginine 147 is an a 1,2-diacyl-sn-glycero-3-phospho-(1'-sn-glycerol) binding site. 3 consecutive transmembrane segments (helical) span residues alanine 187–leucine 207, glycine 211–phenylalanine 231, and methionine 247–tryptophan 267.

Belongs to the Lgt family.

It is found in the cell inner membrane. The enzyme catalyses L-cysteinyl-[prolipoprotein] + a 1,2-diacyl-sn-glycero-3-phospho-(1'-sn-glycerol) = an S-1,2-diacyl-sn-glyceryl-L-cysteinyl-[prolipoprotein] + sn-glycerol 1-phosphate + H(+). It functions in the pathway protein modification; lipoprotein biosynthesis (diacylglyceryl transfer). Functionally, catalyzes the transfer of the diacylglyceryl group from phosphatidylglycerol to the sulfhydryl group of the N-terminal cysteine of a prolipoprotein, the first step in the formation of mature lipoproteins. This Nitrobacter hamburgensis (strain DSM 10229 / NCIMB 13809 / X14) protein is Phosphatidylglycerol--prolipoprotein diacylglyceryl transferase.